A 516-amino-acid polypeptide reads, in one-letter code: Phosphatidylserine decarboxylase proenzyme 2, mitochondrial (516 aa).

The transit peptide at 1–21 (MRPRQRFRRFHPRWSKVNLRG) directs the protein to the mitochondrion. The Mitochondrial matrix segment spans residues 22-33 (FGGVGALKGVKA). A helical membrane pass occupies residues 34–52 (LNGMNVRVSMRLKWISNRI). Over 53 to 516 (HRIRRSRRLG…GQYVRVGEAL (464 aa)) the chain is Mitochondrial intermembrane. Residues Asp159, His373, and Ser488 each act as charge relay system; for autoendoproteolytic cleavage activity in the active site. Residue Ser488 is the Schiff-base intermediate with substrate; via pyruvic acid; for decarboxylase activity of the active site. Pyruvic acid (Ser); by autocatalysis is present on Ser488.

It belongs to the phosphatidylserine decarboxylase family. PSD-B subfamily. Eukaryotic type I sub-subfamily. In terms of assembly, heterodimer of a large membrane-associated beta subunit and a small pyruvoyl-containing alpha subunit. Requires pyruvate as cofactor. Post-translationally, is synthesized initially as an inactive proenzyme. Formation of the active enzyme involves a self-maturation process in which the active site pyruvoyl group is generated from an internal serine residue via an autocatalytic post-translational modification. Two non-identical subunits are generated from the proenzyme in this reaction, and the pyruvate is formed at the N-terminus of the alpha chain, which is derived from the carboxyl end of the proenzyme. The autoendoproteolytic cleavage occurs by a canonical serine protease mechanism, in which the side chain hydroxyl group of the serine supplies its oxygen atom to form the C-terminus of the beta chain, while the remainder of the serine residue undergoes an oxidative deamination to produce ammonia and the pyruvoyl prosthetic group on the alpha chain. During this reaction, the Ser that is part of the protease active site of the proenzyme becomes the pyruvoyl prosthetic group, which constitutes an essential element of the active site of the mature decarboxylase.

The protein resides in the mitochondrion. It is found in the mitochondrion inner membrane. The protein localises to the nucleus envelope. It localises to the lipid droplet. Its subcellular location is the endoplasmic reticulum membrane. It carries out the reaction a 1,2-diacyl-sn-glycero-3-phospho-L-serine + H(+) = a 1,2-diacyl-sn-glycero-3-phosphoethanolamine + CO2. It participates in phospholipid metabolism; phosphatidylethanolamine biosynthesis; phosphatidylethanolamine from CDP-diacylglycerol: step 2/2. In terms of biological role, catalyzes the formation of phosphatidylethanolamine (PtdEtn) from phosphatidylserine (PtdSer). Plays a central role in phospholipid metabolism and in the interorganelle trafficking of phosphatidylserine. Together with psd1 and psd3, responsible for the majority of phosphatidylethanolamine synthesis. Plays a role in lipid droplet biogenesis at the endoplasmic reticulum membrane. In Schizosaccharomyces pombe (strain 972 / ATCC 24843) (Fission yeast), this protein is Phosphatidylserine decarboxylase proenzyme 2, mitochondrial.